We begin with the raw amino-acid sequence, 387 residues long: Succinate--CoA ligase [ADP-forming] subunit beta (387 aa).

Residues 9 to 236 (KELFAKHNVP…RAATDPLELK (228 aa)) form the ATP-grasp domain. Residues Lys45, 52-54 (GRG), Ser94, and Glu99 contribute to the ATP site. Mg(2+) is bound by residues Asn191 and Asp205. Substrate-binding positions include Asn256 and 318 to 320 (GIT).

The protein belongs to the succinate/malate CoA ligase beta subunit family. Heterotetramer of two alpha and two beta subunits. Mg(2+) is required as a cofactor.

It carries out the reaction succinate + ATP + CoA = succinyl-CoA + ADP + phosphate. The catalysed reaction is GTP + succinate + CoA = succinyl-CoA + GDP + phosphate. Its pathway is carbohydrate metabolism; tricarboxylic acid cycle; succinate from succinyl-CoA (ligase route): step 1/1. Succinyl-CoA synthetase functions in the citric acid cycle (TCA), coupling the hydrolysis of succinyl-CoA to the synthesis of either ATP or GTP and thus represents the only step of substrate-level phosphorylation in the TCA. The beta subunit provides nucleotide specificity of the enzyme and binds the substrate succinate, while the binding sites for coenzyme A and phosphate are found in the alpha subunit. The chain is Succinate--CoA ligase [ADP-forming] subunit beta from Mycobacterium tuberculosis (strain CDC 1551 / Oshkosh).